A 624-amino-acid polypeptide reads, in one-letter code: D-3-phosphoglycerate dehydrogenase 2, chloroplastic (624 aa).

The N-terminal 49 residues, 1–49 (MAFSSSCSSVKAVNSRWTSPSPSPSSRFAVLPAFLHRRYATSVKLTAIS), are a transit peptide targeting the chloroplast. A Phosphoserine modification is found at serine 71. NAD(+)-binding positions include 231-232 (KV), aspartate 251, 310-312 (VAR), and aspartate 336. Arginine 312 is a catalytic residue. Glutamate 341 is a catalytic residue. Catalysis depends on histidine 360, which acts as the Proton donor. 360–363 (HLGA) contacts NAD(+). Residues 552-624 (LILCRQVDQP…AIEEFVFLKL (73 aa)) form the ACT domain.

It belongs to the D-isomer specific 2-hydroxyacid dehydrogenase family. As to expression, ubiquitous, but highly expressed in roots and in dark-grown leaf tissues. Expressed in the vasculature, stigma, anther filaments and shoot apical meristem. Not detected in the root meristem or in embryo.

Its subcellular location is the plastid. The protein localises to the chloroplast. The enzyme catalyses (2R)-3-phosphoglycerate + NAD(+) = 3-phosphooxypyruvate + NADH + H(+). Its pathway is amino-acid biosynthesis; L-serine biosynthesis; L-serine from 3-phospho-D-glycerate: step 1/3. Inhibited by 90 uM 3-phosphonooxypyruvate, but not by Ser, Thr, Val, Gly Trp, O-acetyl-L-Ser and Cys. Functionally, involved in the plastidial phosphorylated pathway of serine biosynthesis (PPSB). In Arabidopsis thaliana (Mouse-ear cress), this protein is D-3-phosphoglycerate dehydrogenase 2, chloroplastic (PGDH2).